A 270-amino-acid chain; its full sequence is Putative F-box protein At3g24700 (270 aa).

An F-box domain is found at 1 to 45 (MLTDLPLDLESEILSRVPATSLQRLKTTCKRWYALFRDPRFVKKN).

This chain is Putative F-box protein At3g24700, found in Arabidopsis thaliana (Mouse-ear cress).